We begin with the raw amino-acid sequence, 254 residues long: Nickel import ATP-binding protein NikD (254 aa).

The ABC transporter domain maps to 2-241; it reads PQQIELRNIA…PKHAVTRSLV (240 aa). Position 36–43 (36–43) interacts with ATP; sequence GGSGSGKS.

It belongs to the ABC transporter superfamily. Nickel importer (TC 3.A.1.5.3) family. As to quaternary structure, the complex is composed of two ATP-binding proteins (NikD and NikE), two transmembrane proteins (NikB and NikC) and a solute-binding protein (NikA).

The protein resides in the cell inner membrane. The enzyme catalyses Ni(2+)(out) + ATP + H2O = Ni(2+)(in) + ADP + phosphate + H(+). Part of the ABC transporter complex NikABCDE involved in nickel import. Responsible for energy coupling to the transport system. The chain is Nickel import ATP-binding protein NikD from Escherichia coli (strain UTI89 / UPEC).